Consider the following 247-residue polypeptide: Neurotrophic factor BDNF precursor form (247 aa).

The signal sequence occupies residues 1-18 (MTILFLTMVISYFGCMKA). Residues 19–128 (APMKEANVRG…AANMSMRVRR (110 aa)) constitute a propeptide that is removed on maturation. N121 carries an N-linked (GlcNAc...) asparagine glycan. Intrachain disulfides connect C141-C208, C186-C237, and C196-C239.

It belongs to the NGF-beta family. As to quaternary structure, monomers and homodimers. Binds to NTRK2/TRKB. Can form heterodimers with other neurotrophin family members, such as NTF3 and NTF4 (in vitro), but the physiological relevance of this is not clear. BDNF precursor form: interacts with the heterodimer formed by NGFR and SORCS2. Mature BDNF has much lower affinity for the heterodimer formed by NGFR and SORCS2. In terms of processing, N-glycosylated and glycosulfated, contrary to mature BDNF. Post-translationally, mature BDNF is produced by proteolytic removal of the propeptide, catalyzed by a FURIN family member. In addition, the precursor form is proteolytically cleaved within the propeptide, but this is not an obligatory intermediate for the production of mature BDNF. Can be converted into mature BDNF by plasmin (PLG).

Its subcellular location is the secreted. Important signaling molecule that activates signaling cascades downstream of NTRK2. During development, promotes the survival and differentiation of selected neuronal populations of the peripheral and central nervous systems. Participates in axonal growth, pathfinding and in the modulation of dendritic growth and morphology. Major regulator of synaptic transmission and plasticity at adult synapses in many regions of the CNS. The versatility of BDNF is emphasized by its contribution to a range of adaptive neuronal responses including long-term potentiation (LTP), long-term depression (LTD), certain forms of short-term synaptic plasticity, as well as homeostatic regulation of intrinsic neuronal excitability. Its function is as follows. Important signaling molecule that activates signaling cascades downstream of NTRK2. Activates signaling cascades via the heterodimeric receptor formed by NGFR and SORCS2. Signaling via NGFR and SORCS2 plays a role in synaptic plasticity and long-term depression (LTD). Binding to NGFR and SORCS2 promotes neuronal apoptosis. Promotes neuronal growth cone collapse. In Helarctos malayanus (Malayan sun bear), this protein is Neurotrophic factor BDNF precursor form (BDNF).